Reading from the N-terminus, the 1034-residue chain is MALKKVKGNFFERMFDKNLTDLVRGIRNNKDNEAKYISTCIEEIKQELRQDNISVKCNAVAKLTYIQMLGYDISWAGFNIIEVMSSSRFTCKRIGYLAASQCFHPDSELLMLTTNMIRKDLNSQNQYDAGVALSGLSCFISPDLSRDLANDIMTLMSSTKPYLRMKAVLMMYKVFLRYPEALRPAFPKLKEKLEDPDPGVQSAAVNVICELARKNPKNYLPLAPIFFKLMTTSTNNWMLIKIIKLFGALTPLEPRLGKKLIEPLTNLIHSTSAMSLLYECINTVIAVLISISSGMPNHSASIQLCVQKLRILIEDSDQNLKYLGLLAMSKILKTHPKSVQAHKDLILACLDDKDESIRLRALDLLYGMVSKKNLMEIVKRLLGHMERAEGSAYRDELLYKVIEICAQSSYLYVTNFEWYLTVLVELIQLEAGSRHGRLIAEQLLDVAIRVPVVRQFAVNEMTNLLDTFTVSAQSNSMYEVLYAAAWIVGEFAGELEDAEKTLNILLRPRLLPGHIQGVYVQNVIKLFARLATTCLELQDLPGLVTLCDHVLDKLQHFNGSSDIEVQERANSACMLIEMLRNQLSTSTDAMAMDTTTEGGIPPLAIEIVQEMTLLFTGELIPVAPKAQRKVPLPDGLDLDEWINAPPPEDAASSSSSEHDKDELFVSATQAGTGADGGEKRRQSLELTPEQLERQRMARLIEQSNNPHYLKSTPTASGASNADQYDNIDDIPITELPLDMEGVAALRVGITKRSDKYLQEQQAAQGSKDGKKKHKKGKKSKKAKNKVAYNSSSESEGEPKPLHIVNTTLDMPEGVSMSDSEDKDGKYDPNDPHRALDIELDITEFEAPAVRSASKKSAADKENLKTPADLAGGGNAAKKDRKKDKDKDKERKVKREHRESKRERKEAAVQPVIDLIDADTPTPSPSHISATSNNNNTSTVLPDAPKHHKKKKNKEKTTDEAPDALATATGSSIIDVGGEEASEVASKVHKKKHKKEKSQRKEKKKASESASVSAIVSIGDYEQPLGISTPSKEIL.

HEAT repeat units follow at residues 35 to 72 (KYIS…LGYD), 143 to 180 (DLSR…RYPE), 181 to 217 (ALRP…KNPK), 219 to 255 (YLPL…LEPR), 258 to 297 (KKLI…GMPN), 299 to 337 (SASI…THPK), 338 to 374 (SVQA…KKNL), 376 to 414 (EIVK…LYVT), 415 to 452 (NFEW…RVPV), and 570 to 609 (NSAC…EIVQ). Disordered regions lie at residues 637–660 (DLDE…EHDK), 669–688 (QAGT…ELTP), 701–723 (EQSN…NADQ), and 758–1034 (QEQQ…KEIL). Position 683 is a phosphoserine (Ser-683). Residue Thr-687 is modified to Phosphothreonine. The segment covering 769–784 (GKKKHKKGKKSKKAKN) has biased composition (basic residues). 2 stretches are compositionally biased toward basic and acidic residues: residues 822–836 (KDGK…RALD) and 882–906 (KDKD…RKEA). Residues 928–942 (SATSNNNNTSTVLPD) show a composition bias toward low complexity. A compositionally biased stretch (basic residues) spans 986–1003 (KVHKKKHKKEKSQRKEKK). Residues 1007–1016 (ESASVSAIVS) show a composition bias toward low complexity. Over residues 1025 to 1034 (GISTPSKEIL) the composition is skewed to polar residues.

Belongs to the adaptor complexes large subunit family. In terms of assembly, adaptor protein complex 3 (AP-3) is a heterotetramer composed of two large chains (delta and beta3), a medium chain (mu3) and a small chain (sigma3).

Its subcellular location is the cytoplasmic vesicle. The protein resides in the clathrin-coated vesicle membrane. It localises to the golgi apparatus. Functionally, part of the AP-3 complex, an adapter-related complex which is not clathrin-associated. The complex is associated with the Golgi region as well as more peripheral structures. It facilitates the budding of vesicles from the Golgi membrane and may be directly involved in trafficking to lysosomes. Its function is as follows. May be a coat protein involved in the formation of specialized structures like pigment granules. The protein is AP-3 complex subunit delta (g) of Drosophila melanogaster (Fruit fly).